Here is a 129-residue protein sequence, read N- to C-terminus: Succinate dehydrogenase subunit 3-1, mitochondrial (129 aa).

Residues 1–58 (MEKYHSNSRFAPFRDAPFALRGALGSSGSSFSSIDSLRRSSTLEQARGYTSRPLGAVR) constitute a mitochondrion transit peptide. The segment covering 25–35 (GSSGSSFSSID) has biased composition (low complexity). The tract at residues 25-80 (GSSGSSFSSIDSLRRSSTLEQARGYTSRPLGAVRPKMLPSGCRPLHTSHPLSAPVA) is disordered. His-87 lines the heme pocket. Residues 105–127 (IFGAALGAAIISIPLATKFSLMF) form a helical membrane-spanning segment.

As to quaternary structure, component of complex II composed of eight subunits in plants: four classical SDH subunits SDH1, SDH2, SDH3 and SDH4 (a flavoprotein (FP), an iron-sulfur protein (IP), and a cytochrome b composed of a large and a small subunit.), as well as four subunits unknown in mitochondria from bacteria and heterotrophic eukaryotes. Requires heme as cofactor.

Its subcellular location is the mitochondrion inner membrane. It functions in the pathway carbohydrate metabolism; tricarboxylic acid cycle. Membrane-anchoring subunit of succinate dehydrogenase (SDH). In Oryza sativa subsp. japonica (Rice), this protein is Succinate dehydrogenase subunit 3-1, mitochondrial.